A 153-amino-acid chain; its full sequence is Histone H2B.3 (153 aa).

Basic and acidic residues-rich tracts occupy residues 1 to 10 (MAPKKDEKPA) and 20 to 54 (AKAE…GEKK). The tract at residues 1-60 (MAPKKDEKPATAEAGAEAPAKAEAKPKAEKAGKKAKKEPAKKAAKEPKGDGEKKDKKKKK) is disordered. An N6-acetyllysine mark is found at lysine 41 and lysine 42. Residue lysine 149 forms a Glycyl lysine isopeptide (Lys-Gly) (interchain with G-Cter in ubiquitin) linkage.

Belongs to the histone H2B family. In terms of assembly, the nucleosome is a histone octamer containing two molecules each of H2A, H2B, H3 and H4 assembled in one H3-H4 heterotetramer and two H2A-H2B heterodimers. The octamer wraps approximately 147 bp of DNA. In terms of processing, the N-terminus is blocked. Post-translationally, can be acetylated to form H2BK33ac and H2BK34ac. Acetylated mainly on the ubiquitinated form. Monoubiquitinated to form H2BK143ub1; which is increased during the light period and may give a specific tag for epigenetic transcriptional activation.

The protein resides in the nucleus. Its subcellular location is the chromosome. Functionally, core component of nucleosome. Nucleosomes wrap and compact DNA into chromatin, limiting DNA accessibility to the cellular machineries which require DNA as a template. Histones thereby play a central role in transcription regulation, DNA repair, DNA replication and chromosomal stability. DNA accessibility is regulated via a complex set of post-translational modifications of histones, also called histone code, and nucleosome remodeling. The polypeptide is Histone H2B.3 (Chlamydomonas reinhardtii (Chlamydomonas smithii)).